The sequence spans 545 residues: GMP synthase [glutamine-hydrolyzing] (545 aa).

The Glutamine amidotransferase type-1 domain maps to 17 to 211 (TVLVLDMGSQ…ATKICGARPD (195 aa)). The Nucleophile role is filled by cysteine 93. Residues histidine 185 and glutamate 187 contribute to the active site. A GMPS ATP-PPase domain is found at 212–420 (WKMDDFSARE…LGIHEELIGR (209 aa)). Residue 240 to 246 (SGGVDST) coordinates ATP. Residues arginine 313, aspartate 482, lysine 537, and glutamate 543 each coordinate XMP.

In terms of assembly, homodimer. Mg(2+) serves as cofactor.

It localises to the cytoplasm. It is found in the cytosol. The enzyme catalyses XMP + L-glutamine + ATP + H2O = GMP + L-glutamate + AMP + diphosphate + 2 H(+). It functions in the pathway purine metabolism; GMP biosynthesis; GMP from XMP (L-Gln route): step 1/1. In terms of biological role, catalyzes the conversion of xanthine monophosphate (XMP) to GMP in the presence of glutamine and ATP through an adenyl-XMP intermediate. In Gibberella zeae (strain ATCC MYA-4620 / CBS 123657 / FGSC 9075 / NRRL 31084 / PH-1) (Wheat head blight fungus), this protein is GMP synthase [glutamine-hydrolyzing] (GUA1).